Reading from the N-terminus, the 355-residue chain is Guanine nucleotide-binding protein alpha-2 subunit (355 aa).

The disordered stretch occupies residues 1–20 (MCFGGRGKDDEAEASRSREL). The region spanning 33–355 (KEVKLLLLGA…IQRNLKQLIL (323 aa)) is the G-alpha domain. The G1 motif stretch occupies residues 36–49 (KLLLLGAGESGKST). E44, S45, G46, K47, S48, T49, D151, L176, T182, G204, N270, K271, D273, and A328 together coordinate GTP. S48 serves as a coordination point for Mg(2+). Residues 174–182 (DLLRSRLRT) form a G2 motif region. T182 serves as a coordination point for Mg(2+). The G3 motif stretch occupies residues 197–206 (YRMFDVGGQR). A G4 motif region spans residues 266–273 (ILFLNKID). Positions 326–331 (TNATDT) are G5 motif.

Belongs to the G-alpha family. G(q) subfamily. In terms of assembly, g proteins are composed of 3 units; alpha, beta and gamma. The alpha chain contains the guanine nucleotide binding site. Mg(2+) serves as cofactor.

Functionally, guanine nucleotide-binding proteins (G proteins) are involved as modulators or transducers in various transmembrane signaling systems. The sequence is that of Guanine nucleotide-binding protein alpha-2 subunit (gna-2) from Neurospora crassa (strain ATCC 24698 / 74-OR23-1A / CBS 708.71 / DSM 1257 / FGSC 987).